A 1914-amino-acid chain; its full sequence is Diacylglycerol kinase eta (1914 aa).

A compositionally biased stretch (basic and acidic residues) spans 1 to 10; it reads MSHLKLDTLH. Residues 1–37 are disordered; that stretch reads MSHLKLDTLHVQRSPRGSRRSSRSSGRSSACSSGSIS. Over residues 23–37 the composition is skewed to low complexity; the sequence is RSSGRSSACSSGSIS. The PH domain maps to 82 to 175; it reads AIIKEGFLLK…WLGSLKTATA (94 aa). 2 Phorbol-ester/DAG-type zinc fingers span residues 195–245 and 268–319; these read HHHW…IANC and PHQW…AVAC. The region spanning 350–486 is the DAGKc domain; it reads GNFSPLLVFV…DRWSIMVFEK (137 aa). Disordered regions lie at residues 621–642, 783–805, 1016–1053, 1116–1135, and 1175–1216; these read EKDQ…SEKE, GANI…NTPT, TLCS…PPRI, QHRG…TPTN, and PNTI…TVSL. Polar residues predominate over residues 1175-1187; it reads PNTILTTSTSPTK. In terms of domain architecture, SAM spans 1851-1914; the sequence is WSVNEVVTWL…LQAIKDLSEN (64 aa).

This sequence belongs to the eukaryotic diacylglycerol kinase family.

The protein resides in the cytoplasm. The enzyme catalyses a 1,2-diacyl-sn-glycerol + ATP = a 1,2-diacyl-sn-glycero-3-phosphate + ADP + H(+). Its function is as follows. Phosphorylates diacylglycerol (DAG) to generate phosphatidic acid (PA). The protein is Diacylglycerol kinase eta of Drosophila sechellia (Fruit fly).